Here is a 373-residue protein sequence, read N- to C-terminus: MFTRADLEAREAALLPPFARRSSEARRAVPEAPSETRTAYQKDRDRVLHTKAFRRLEAKTQVFLNAPALGDHYRTRLTHTLEVQQVARTAALSLGLNETLAETVALAHDLGHPPFGHAGERLLDSLMRGHGETFDHNSQARRIVTLLEERSGEQPGLNLTLDTLDGLNKHGRAALPPTQRQPSLEAQVVDAADALAYTAHDLDDGLRSGLLHPEDLLELPLWRELQERSGVTSQRPSSADLRTLQRELLGWLIGDLTRSSDAAIAASGVASPDAVQAHAHRLVTYSPALRGHLRGAGDFLRERLYRHWQVEREVYQAEQVLTELFGAFLTRPALLPPRPRSRVGRDGLPRAICDHLAGMTDRYALETHAALRG.

The segment at 21 to 43 is disordered; that stretch reads RSSEARRAVPEAPSETRTAYQKD. An HD domain is found at 76 to 198; the sequence is RLTHTLEVQQ…VDAADALAYT (123 aa).

Belongs to the dGTPase family. Type 2 subfamily.

This Deinococcus radiodurans (strain ATCC 13939 / DSM 20539 / JCM 16871 / CCUG 27074 / LMG 4051 / NBRC 15346 / NCIMB 9279 / VKM B-1422 / R1) protein is Deoxyguanosinetriphosphate triphosphohydrolase-like protein 1.